Here is a 392-residue protein sequence, read N- to C-terminus: Lipid-A-disaccharide synthase (392 aa).

The protein belongs to the LpxB family.

The enzyme catalyses a lipid X + a UDP-2-N,3-O-bis[(3R)-3-hydroxyacyl]-alpha-D-glucosamine = a lipid A disaccharide + UDP + H(+). It functions in the pathway bacterial outer membrane biogenesis; LPS lipid A biosynthesis. Its function is as follows. Condensation of UDP-2,3-diacylglucosamine and 2,3-diacylglucosamine-1-phosphate to form lipid A disaccharide, a precursor of lipid A, a phosphorylated glycolipid that anchors the lipopolysaccharide to the outer membrane of the cell. The chain is Lipid-A-disaccharide synthase from Prochlorococcus marinus (strain MIT 9313).